Here is a 215-residue protein sequence, read N- to C-terminus: Probable transaldolase (215 aa).

Lysine 83 serves as the catalytic Schiff-base intermediate with substrate.

The protein belongs to the transaldolase family. Type 3B subfamily.

Its subcellular location is the cytoplasm. It catalyses the reaction D-sedoheptulose 7-phosphate + D-glyceraldehyde 3-phosphate = D-erythrose 4-phosphate + beta-D-fructose 6-phosphate. It functions in the pathway carbohydrate degradation; pentose phosphate pathway; D-glyceraldehyde 3-phosphate and beta-D-fructose 6-phosphate from D-ribose 5-phosphate and D-xylulose 5-phosphate (non-oxidative stage): step 2/3. Transaldolase is important for the balance of metabolites in the pentose-phosphate pathway. This Desulforapulum autotrophicum (strain ATCC 43914 / DSM 3382 / VKM B-1955 / HRM2) (Desulfobacterium autotrophicum) protein is Probable transaldolase.